Here is a 106-residue protein sequence, read N- to C-terminus: uncharacterized protein (106 aa).

2 consecutive transmembrane segments (helical) span residues 17-37 and 55-75; these read AGLLMTISLAKSFSFAIAVLV and FSSSYVFLYFIVICRLRFMIF.

The protein localises to the membrane. This is an uncharacterized protein from Saccharomyces cerevisiae (strain ATCC 204508 / S288c) (Baker's yeast).